Here is a 213-residue protein sequence, read N- to C-terminus: Pyridoxine/pyridoxamine 5'-phosphate oxidase (213 aa).

Residues 8–11 and K67 contribute to the substrate site; that span reads RREY. Residues 62 to 67, 77 to 78, R83, K84, and Q106 each bind FMN; these read RIVLLK and FT. Positions 124, 128, and 132 each coordinate substrate. FMN is bound by residues 141-142 and W186; that span reads QS. 192-194 lines the substrate pocket; sequence RLH. R196 contacts FMN.

The protein belongs to the pyridoxamine 5'-phosphate oxidase family. As to quaternary structure, homodimer. FMN is required as a cofactor.

The enzyme catalyses pyridoxamine 5'-phosphate + O2 + H2O = pyridoxal 5'-phosphate + H2O2 + NH4(+). It carries out the reaction pyridoxine 5'-phosphate + O2 = pyridoxal 5'-phosphate + H2O2. It functions in the pathway cofactor metabolism; pyridoxal 5'-phosphate salvage; pyridoxal 5'-phosphate from pyridoxamine 5'-phosphate: step 1/1. It participates in cofactor metabolism; pyridoxal 5'-phosphate salvage; pyridoxal 5'-phosphate from pyridoxine 5'-phosphate: step 1/1. Functionally, catalyzes the oxidation of either pyridoxine 5'-phosphate (PNP) or pyridoxamine 5'-phosphate (PMP) into pyridoxal 5'-phosphate (PLP). In Shewanella woodyi (strain ATCC 51908 / MS32), this protein is Pyridoxine/pyridoxamine 5'-phosphate oxidase.